A 96-amino-acid chain; its full sequence is Ferredoxin-1 (96 aa).

The region spanning 1-95 (MKVIINGKEF…DCDEIVIESE (95 aa)) is the 2Fe-2S ferredoxin-type domain. Cys34, Cys39, Cys42, and Cys78 together coordinate [2Fe-2S] cluster. Residues Cys52 and Cys87 are joined by a disulfide bond.

This sequence belongs to the 2Fe2S plant-type ferredoxin family. It depends on [2Fe-2S] cluster as a cofactor.

Functionally, ferredoxins are iron-sulfur proteins that transfer electrons in a wide variety of metabolic reactions. This is Ferredoxin-1 (fdx1) from Aquifex aeolicus (strain VF5).